The sequence spans 96 residues: Large ribosomal subunit protein bL28 (96 aa).

This sequence belongs to the bacterial ribosomal protein bL28 family.

The protein is Large ribosomal subunit protein bL28 of Methylocella silvestris (strain DSM 15510 / CIP 108128 / LMG 27833 / NCIMB 13906 / BL2).